A 519-amino-acid chain; its full sequence is Cytochrome P450 monooxygenase easM (519 aa).

A helical transmembrane segment spans residues Val-16–Ser-33. Residues Asn-50 and Asn-353 are each glycosylated (N-linked (GlcNAc...) asparagine). Cys-458 is a binding site for heme.

This sequence belongs to the cytochrome P450 family. Heme is required as a cofactor.

The protein localises to the membrane. It functions in the pathway alkaloid biosynthesis; ergot alkaloid biosynthesis. Its function is as follows. Cytochrome P450 monooxygenase; part of the gene cluster that mediates the biosynthesis of fumiclavanine C, a fungal ergot alkaloid. DmaW catalyzes the first step of ergot alkaloid biosynthesis by condensing dimethylallyl diphosphate (DMAP) and tryptophan to form 4-dimethylallyl-L-tryptophan. The second step is catalyzed by the methyltransferase easF that methylates 4-dimethylallyl-L-tryptophan in the presence of S-adenosyl-L-methionine, resulting in the formation of 4-dimethylallyl-L-abrine. The catalase easC and the FAD-dependent oxidoreductase easE then transform 4-dimethylallyl-L-abrine to chanoclavine-I which is further oxidized by EasD in the presence of NAD(+), resulting in the formation of chanoclavine-I aldehyde. EasA reduces chanoclavine-I aldehyde to dihydrochanoclavine-I aldehyde that spontaneously dehydrates to form 6,8-dimethyl-6,7-didehydroergoline. EasG then catalyzes the reduction of 6,8-dimethyl-6,7-didehydroergoline to form festuclavine. Hydrolysis of festuclavine by easM then leads to the formation of fumigaclavine B which is in turn acetylated by easN to fumigaclavine A. Finally, easL catalyzes the conversion of fumigaclavine A into fumigaclavine C by attaching a dimethylallyl moiety to C-2 of the indole nucleus. The sequence is that of Cytochrome P450 monooxygenase easM from Aspergillus fumigatus (strain ATCC MYA-4609 / CBS 101355 / FGSC A1100 / Af293) (Neosartorya fumigata).